We begin with the raw amino-acid sequence, 275 residues long: MISVAPKVNQANTSLKLDLDNLTTEQTALEIKDLDLYYGDKQALSKVNMNIPKGQVTAFIGPSGCGKSTLLRCINRMNDLVDICRIEGEILLHGQNIYDKSVDVAALRRNVGMVFQRPNPFPKSIYENVVYGLRLQGIKDKRKLDEVVEQSLRGAALWDEVKDRLHDSAFGLSGGQQQRLVIARSIAISPEVLLLDEPTSALDPISTLVIEELINDLKSKFTVVIVTHNMQQAARVSDQTAFMYMGELIEYSDTNTLFTTPNKKKTEDYITGRYG.

An ABC transporter domain is found at leucine 29–isoleucine 270. Glycine 61–serine 68 contacts ATP.

Belongs to the ABC transporter superfamily. Phosphate importer (TC 3.A.1.7) family. In terms of assembly, the complex is composed of two ATP-binding proteins (PstB), two transmembrane proteins (PstC and PstA) and a solute-binding protein (PstS).

It localises to the cell inner membrane. The enzyme catalyses phosphate(out) + ATP + H2O = ADP + 2 phosphate(in) + H(+). Functionally, part of the ABC transporter complex PstSACB involved in phosphate import. Responsible for energy coupling to the transport system. In Pseudoalteromonas translucida (strain TAC 125), this protein is Phosphate import ATP-binding protein PstB.